We begin with the raw amino-acid sequence, 428 residues long: Pyruvate kinase (428 aa).

Substrate is bound at residue Arg-34. K(+) contacts are provided by Asn-36, Ser-38, Asp-68, and Thr-69. 36 to 39 (NFSH) is a binding site for ATP. ATP-binding residues include Arg-75 and Lys-152. Glu-214 is a Mg(2+) binding site. The substrate site is built by Gly-237, Asp-238, and Thr-270. Residue Asp-238 participates in Mg(2+) binding.

Belongs to the pyruvate kinase family. As to quaternary structure, homotetramer. Mg(2+) is required as a cofactor. Requires K(+) as cofactor.

It carries out the reaction pyruvate + ATP = phosphoenolpyruvate + ADP + H(+). It participates in carbohydrate degradation; glycolysis; pyruvate from D-glyceraldehyde 3-phosphate: step 5/5. This chain is Pyruvate kinase (PYK1), found in Encephalitozoon cuniculi (strain GB-M1) (Microsporidian parasite).